The chain runs to 579 residues: Chromosomal replication initiator protein DnaA (579 aa).

A domain I, interacts with DnaA modulators region spans residues 1–71 (MQDFWQAAAA…TALACEYWET (71 aa)). The interval 71 to 242 (TQVSVHFVLD…QQSDTVHERS (172 aa)) is domain II. Disordered regions lie at residues 131 to 196 (AGAQ…SAAH) and 212 to 240 (EASA…TVHE). Low complexity predominate over residues 171 to 183 (SQSQQSAQGRGAA). The segment at 243–459 (RLNPILTFDN…GALRKILAFS (217 aa)) is domain III, AAA+ region. ATP contacts are provided by Gly-287, Gly-289, Lys-290, and Thr-291. The segment at 460–579 (NFHGKDITID…LHVLEQTLKG (120 aa)) is domain IV, binds dsDNA.

Belongs to the DnaA family. In terms of assembly, oligomerizes as a right-handed, spiral filament on DNA at oriC.

It localises to the cytoplasm. Its function is as follows. Plays an essential role in the initiation and regulation of chromosomal replication. ATP-DnaA binds to the origin of replication (oriC) to initiate formation of the DNA replication initiation complex once per cell cycle. Binds the DnaA box (a 9 base pair repeat at the origin) and separates the double-stranded (ds)DNA. Forms a right-handed helical filament on oriC DNA; dsDNA binds to the exterior of the filament while single-stranded (ss)DNA is stabiized in the filament's interior. The ATP-DnaA-oriC complex binds and stabilizes one strand of the AT-rich DNA unwinding element (DUE), permitting loading of DNA polymerase. After initiation quickly degrades to an ADP-DnaA complex that is not apt for DNA replication. Binds acidic phospholipids. This is Chromosomal replication initiator protein DnaA from Cupriavidus metallidurans (strain ATCC 43123 / DSM 2839 / NBRC 102507 / CH34) (Ralstonia metallidurans).